The chain runs to 149 residues: Arginine repressor (149 aa).

This sequence belongs to the ArgR family.

The protein resides in the cytoplasm. The protein operates within amino-acid biosynthesis; L-arginine biosynthesis [regulation]. Functionally, regulates arginine biosynthesis genes. The polypeptide is Arginine repressor (Listeria welshimeri serovar 6b (strain ATCC 35897 / DSM 20650 / CCUG 15529 / CIP 8149 / NCTC 11857 / SLCC 5334 / V8)).